We begin with the raw amino-acid sequence, 610 residues long: Glutamine--fructose-6-phosphate aminotransferase [isomerizing] (610 aa).

Cys2 serves as the catalytic Nucleophile; for GATase activity. Residues 2–218 (CGIVGAVAQR…EGDVAEITRR (217 aa)) enclose the Glutamine amidotransferase type-2 domain. SIS domains are found at residues 286-426 (AADI…EQGR) and 459-600 (LATD…VDQP). Lys605 acts as the For Fru-6P isomerization activity in catalysis.

Homodimer.

It is found in the cytoplasm. The enzyme catalyses D-fructose 6-phosphate + L-glutamine = D-glucosamine 6-phosphate + L-glutamate. Functionally, catalyzes the first step in hexosamine metabolism, converting fructose-6P into glucosamine-6P using glutamine as a nitrogen source. This chain is Glutamine--fructose-6-phosphate aminotransferase [isomerizing], found in Vibrio parahaemolyticus serotype O3:K6 (strain RIMD 2210633).